The chain runs to 633 residues: tRNA uridine 5-carboxymethylaminomethyl modification enzyme MnmG (633 aa).

Residues 15–20 (GAGHAG), Val127, and Ser182 each bind FAD. 276 to 290 (GPRYCPSIEDKIVRF) contacts NAD(+). Residue Gln373 participates in FAD binding.

The protein belongs to the MnmG family. In terms of assembly, homodimer. Heterotetramer of two MnmE and two MnmG subunits. FAD serves as cofactor.

The protein localises to the cytoplasm. In terms of biological role, NAD-binding protein involved in the addition of a carboxymethylaminomethyl (cmnm) group at the wobble position (U34) of certain tRNAs, forming tRNA-cmnm(5)s(2)U34. This is tRNA uridine 5-carboxymethylaminomethyl modification enzyme MnmG from Streptococcus thermophilus (strain CNRZ 1066).